We begin with the raw amino-acid sequence, 530 residues long: UDP-glucuronosyltransferase 1A9 (530 aa).

An N-terminal signal peptide occupies residues 1–25 (MACTGWTSPLPLCVCLLLTCGFAEA). N-linked (GlcNAc...) asparagine glycosylation occurs at Asn71. An N6-succinyllysine modification is found at Lys99. Asn292 and Asn344 each carry an N-linked (GlcNAc...) asparagine glycan. The helical transmembrane segment at 488–504 (VIGFLLAVVLTVAFITF) threads the bilayer.

It belongs to the UDP-glycosyltransferase family. As to quaternary structure, homodimer. Homooligomer. Interacts with UGT1A1, UGT1A3, UGT1A4, UGT1A6, UGT1A7, UGT1A8 and UGT1A10 to form heterodimers. Isoform 1 interacts with isoform 2/i2 suggesting that oligomerization is involved in negative regulation of transferase activity by isoform 2. Isoform 1 also interacts with respective i2 isoforms of UGT1A1, UGT1A3, UGT1A4, UGT1A6, UGT1A7, UGT1A8 and UGT1A10. Expressed in liver, kidney, colon, esophagus and small intestine.

It is found in the endoplasmic reticulum membrane. The catalysed reaction is glucuronate acceptor + UDP-alpha-D-glucuronate = acceptor beta-D-glucuronoside + UDP + H(+). It carries out the reaction 2-hydroxy-17beta-estradiol + UDP-alpha-D-glucuronate = 2-hydroxy-17beta-estradiol 3-O-(beta-D-glucuronate) + UDP + H(+). The enzyme catalyses 4-hydroxy-17beta-estradiol + UDP-alpha-D-glucuronate = 17beta-estradiol 4-O-(beta-D-glucuronate) + UDP + H(+). It catalyses the reaction 2-hydroxyestrone + UDP-alpha-D-glucuronate = 2-hydroxyestrone 3-O-(beta-D-glucuronate) + UDP + H(+). The catalysed reaction is 4-hydroxyestrone + UDP-alpha-D-glucuronate = estrone 4-O-(beta-D-glucuronate) + UDP + H(+). It carries out the reaction prunetin + UDP-alpha-D-glucuronate = prunetin-5-O-beta-D-glucuronide + UDP. The enzyme catalyses 8-iso-prostaglandin F2alpha + UDP-alpha-D-glucuronate = 8-iso-prostaglandin F2alpha-glucuronide + UDP + H(+). It catalyses the reaction 5-epi-5-F2t-IsoP + UDP-alpha-D-glucuronate = 5-epi-5-F2t-IsoP-glucuronide + UDP + H(+). The catalysed reaction is (5Z,8Z,11Z,14Z)-eicosatetraenoate + UDP-alpha-D-glucuronate = O-[(5Z),(8Z),(11Z),(14Z)-eicosatetraenoyl]-beta-D-glucuronate + UDP. It carries out the reaction 15-hydroxy-(5Z,8Z,11Z,13E)-eicosatetraenoate + UDP-alpha-D-glucuronate = 15-O-(beta-D-glucuronosyl)-(5Z,8Z,11Z,14Z)-eicosatetraenoate + UDP + H(+). The enzyme catalyses prostaglandin B1 + UDP-alpha-D-glucuronate = 15-O-(beta-D-glucuronosyl)-prostaglandin B1 + UDP + H(+). It catalyses the reaction (E)-ferulate + UDP-alpha-D-glucuronate = (E)-4-O-(beta-D-glucuronosyl)-ferulate + UDP + H(+). The catalysed reaction is (E)-ferulate + UDP-alpha-D-glucuronate = (E)-ferulic acid beta-D-glucuronate ester + UDP. It carries out the reaction candesartan + UDP-alpha-D-glucuronate = candesartan O-beta-D-glucuronoside + UDP. The enzyme catalyses SN-38 + UDP-alpha-D-glucuronate = SN-38 O-beta-D-glucuronide + UDP + H(+). It catalyses the reaction mycophenolate + UDP-alpha-D-glucuronate = mycophenolate 7-O-beta-D-glucuronide + UDP + H(+). UDP-glucuronosyltransferase (UGT) that catalyzes phase II biotransformation reactions in which lipophilic substrates are conjugated with glucuronic acid to increase the metabolite's water solubility, thereby facilitating excretion into either the urine or bile. Essential for the elimination and detoxification of drugs, xenobiotics and endogenous compounds. Catalyzes the glucuronidation of endogenous estrogen hormones such as estradiol and estrone. Involved in the glucuronidation of arachidonic acid (AA) and AA-derived eicosanoids including 15-HETE, PGB1 and F2-isoprostanes (8-iso-PGF2alpha and 5-epi-5-F2t-IsoP). Glucuronates the phytochemical ferulic acid efficently at both the phenolic or the carboxylic acid group. Also catalyzes the glucuronidation of the isoflavones genistein, daidzein, glycitein, formononetin, biochanin A and prunetin, which are phytoestrogens with anticancer and cardiovascular properties. Involved in the glucuronidation of the AGTR1 angiotensin receptor antagonist caderastan, a drug which can inhibit the effect of angiotensin II. Involved in the biotransformation of 7-ethyl-10-hydroxycamptothecin (SN-38), the pharmacologically active metabolite of the anticancer drug irinotecan. Also metabolizes mycophenolate, an immunosuppressive agent. Functionally, lacks UGT glucuronidation activity but acts as a negative regulator of isoform 1. The protein is UDP-glucuronosyltransferase 1A9 of Homo sapiens (Human).